A 226-amino-acid polypeptide reads, in one-letter code: Ribosome-recycling factor, mitochondrial (226 aa).

The protein belongs to the RRF family.

It is found in the mitochondrion. In terms of biological role, necessary for protein synthesis in mitochondria. Functions as a ribosome recycling factor in mitochondria. This chain is Ribosome-recycling factor, mitochondrial (RRF1), found in Eremothecium gossypii (strain ATCC 10895 / CBS 109.51 / FGSC 9923 / NRRL Y-1056) (Yeast).